A 283-amino-acid chain; its full sequence is Gap junction beta-1 protein (283 aa).

The Cytoplasmic portion of the chain corresponds to 1–22 (MNWTGLYTLLSGVNRHSTAIGR). The chain crosses the membrane as a helical span at residues 23 to 45 (VWLSVIFIFRIMVLVVAAESVWG). Residues 46 to 75 (DEKSSFICNTLQPGCNSVCYDHFFPISHVR) are Extracellular-facing. Residues 76–95 (LWSLQLILVSTPALLVAMHV) form a helical membrane-spanning segment. The Cytoplasmic portion of the chain corresponds to 96 to 130 (AHQQHIEKKMLRLEGHGDPLHLEEVKRHKVHISGT). A helical membrane pass occupies residues 131–153 (LWWTYVISVVFRLLFEAVFMYVF). Over 154–191 (YLLYPGYAMVRLVKCEAFPCPNTVDCFVSRPTEKTVFT) the chain is Extracellular. Residues 192-214 (VFMLAASGICIILNVAEVVYLII) traverse the membrane as a helical segment. Over 215–283 (RACARRAQRR…AEKSDRCSAC (69 aa)) the chain is Cytoplasmic. Residues S233, S258, S266, and S277 each carry the phosphoserine modification.

It belongs to the connexin family. Beta-type (group I) subfamily. In terms of assembly, a connexon is composed of a hexamer of connexins. Interacts with CNST.

It is found in the cell membrane. The protein resides in the cell junction. It localises to the gap junction. Functionally, one gap junction consists of a cluster of closely packed pairs of transmembrane channels, the connexons, through which materials of low MW diffuse from one cell to a neighboring cell. This is Gap junction beta-1 protein (Gjb1) from Mus musculus (Mouse).